A 145-amino-acid polypeptide reads, in one-letter code: Basic phospholipase A2 textilotoxin A chain (145 aa).

The first 19 residues, 1 to 19 (MHPAHLLVLLGVCVSLLGA), serve as a signal peptide directing secretion. Residues 20–27 (SDIPPLPL) constitute a propeptide that is removed on maturation. Intrachain disulfides connect C38/C98, C54/C144, C56/C72, C71/C125, C78/C118, C87/C111, and C105/C116. Residues Y55, G57, and G59 each coordinate Ca(2+). H75 is a catalytic residue. D76 is a Ca(2+) binding site. Residue D119 is part of the active site.

Belongs to the phospholipase A2 family. Group I subfamily. D49 sub-subfamily. In terms of assembly, heterohexamer. 2 forms exist: 2 A or 2 B chains, 2 C chains and 2 covalently-linked D chains, and 1 A or 1 B, 1 C, 2 covalently-linked D chains and 2 differentially glycosylated covalently-linked D chains. Textilotoxin was originally described as pentameric. Ca(2+) is required as a cofactor. In terms of tissue distribution, expressed by the venom gland.

The protein localises to the secreted. The enzyme catalyses a 1,2-diacyl-sn-glycero-3-phosphocholine + H2O = a 1-acyl-sn-glycero-3-phosphocholine + a fatty acid + H(+). Functionally, snake venom oligomeric phospholipase A2 that has potent presynaptic neurotoxicity. Chain A possesses a very low toxicity, but is essential for neurotoxicity. Possesses a low enzymatic activity. PLA2 catalyzes the calcium-dependent hydrolysis of the 2-acyl groups in 3-sn-phosphoglycerides. This is Basic phospholipase A2 textilotoxin A chain from Pseudonaja textilis (Eastern brown snake).